The sequence spans 711 residues: Amino-acid racemase (711 aa).

Topologically, residues methionine 1–arginine 14 are cytoplasmic. A helical transmembrane segment spans residues phenylalanine 15–threonine 35. Topologically, residues glycine 36 to asparagine 37 are extracellular. Residues phenylalanine 38–phenylalanine 58 traverse the membrane as a helical segment. Residues phenylalanine 59–threonine 78 are Cytoplasmic-facing. A helical transmembrane segment spans residues threonine 79–phenylalanine 99. The Extracellular segment spans residues lysine 100–threonine 117. The chain crosses the membrane as a helical span at residues leucine 118–valine 138. Topologically, residues lysine 139–alanine 146 are cytoplasmic. The chain crosses the membrane as a helical span at residues phenylalanine 147–valine 167. The Extracellular portion of the chain corresponds to lysine 168–arginine 188. Residues asparagine 189 to asparagine 209 form a helical membrane-spanning segment. The Cytoplasmic portion of the chain corresponds to arginine 210–histidine 241. The chain crosses the membrane as a helical span at residues aspartate 242 to phenylalanine 262. The Extracellular segment spans residues arginine 263–serine 306. Residues leucine 307–leucine 327 traverse the membrane as a helical segment. Residues leucine 328–alanine 711 lie on the Cytoplasmic side of the membrane. A racemase region spans residues alanine 336–alanine 711. Lysine 376 serves as the catalytic Proton acceptor. N6-(pyridoxal phosphate)lysine is present on lysine 376. Arginine 470 is a binding site for substrate. Tyrosine 602 functions as the Proton acceptor in the catalytic mechanism. Substrate is bound at residue methionine 651.

It in the N-terminal section; belongs to the acyltransferase 3 family. In the C-terminal section; belongs to the alanine racemase family. Pyridoxal 5'-phosphate is required as a cofactor.

It is found in the cell membrane. In Enterococcus faecalis (Streptococcus faecalis), this protein is Amino-acid racemase (vanTG).